The following is a 310-amino-acid chain: Lipoyl synthase (310 aa).

Residues C41, C46, C52, C68, C72, C75, and S281 each coordinate [4Fe-4S] cluster. Positions 54-270 (GERRTATFMI…RKVAMEKGFK (217 aa)) constitute a Radical SAM core domain. Residues 285-310 (DEQVNEAAKERQRIGDEKLEAAKNEA) are disordered.

This sequence belongs to the radical SAM superfamily. Lipoyl synthase family. Requires [4Fe-4S] cluster as cofactor.

The protein localises to the cytoplasm. It carries out the reaction [[Fe-S] cluster scaffold protein carrying a second [4Fe-4S](2+) cluster] + N(6)-octanoyl-L-lysyl-[protein] + 2 oxidized [2Fe-2S]-[ferredoxin] + 2 S-adenosyl-L-methionine + 4 H(+) = [[Fe-S] cluster scaffold protein] + N(6)-[(R)-dihydrolipoyl]-L-lysyl-[protein] + 4 Fe(3+) + 2 hydrogen sulfide + 2 5'-deoxyadenosine + 2 L-methionine + 2 reduced [2Fe-2S]-[ferredoxin]. Its pathway is protein modification; protein lipoylation via endogenous pathway; protein N(6)-(lipoyl)lysine from octanoyl-[acyl-carrier-protein]. In terms of biological role, catalyzes the radical-mediated insertion of two sulfur atoms into the C-6 and C-8 positions of the octanoyl moiety bound to the lipoyl domains of lipoate-dependent enzymes, thereby converting the octanoylated domains into lipoylated derivatives. This chain is Lipoyl synthase, found in Staphylococcus carnosus (strain TM300).